Consider the following 167-residue polypeptide: MLVIHQRLPARSPRWDEELHLTYEARSKSRLRCFAASGEEVGLFLERGQPPLADGDCLEARDGRLVRVVARPERLLHVTCASPLELTRAAYHLGNRHVALQVGDGWLRLLDDYVLKAMLEQLGATVEAIEAPFQPEHGAYGGGHHHSHHGEAEFNYAPRLHQFGVRR.

This sequence belongs to the UreE family.

It is found in the cytoplasm. In terms of biological role, involved in urease metallocenter assembly. Binds nickel. Probably functions as a nickel donor during metallocenter assembly. The chain is Urease accessory protein UreE from Pseudomonas aeruginosa (strain UCBPP-PA14).